We begin with the raw amino-acid sequence, 88 residues long: Cell division topological specificity factor (88 aa).

The protein belongs to the MinE family.

Prevents the cell division inhibition by proteins MinC and MinD at internal division sites while permitting inhibition at polar sites. This ensures cell division at the proper site by restricting the formation of a division septum at the midpoint of the long axis of the cell. The protein is Cell division topological specificity factor of Carboxydothermus hydrogenoformans (strain ATCC BAA-161 / DSM 6008 / Z-2901).